The chain runs to 1261 residues: AT-rich interactive domain-containing protein 4A (1261 aa).

Residues 4-121 (ADEPAYLTVG…RHFAESETLD (118 aa)) form a DNA-binding region. Disordered regions lie at residues 142-169 (RGRR…DKRR), 273-310 (ESSS…LDPE), and 435-470 (APEM…PRGR). 2 stretches are compositionally biased toward acidic residues: residues 151–165 (TEDE…EEDE) and 276–289 (SSDD…EHEE). Residues 290 to 299 (EKEKEAKKEE) are compositionally biased toward basic and acidic residues. Residues 300-310 (EELPEEELDPE) are compositionally biased toward acidic residues. The 93-residue stretch at 309 to 401 (PEERDNFLQQ…YLYGFEEYCR (93 aa)) folds into the ARID domain. Lys-481 participates in a covalent cross-link: Glycyl lysine isopeptide (Lys-Gly) (interchain with G-Cter in SUMO2). Disordered stretches follow at residues 498–582 (LENK…GTKV), 633–768 (WPLD…EAGD), and 842–953 (FSST…EDAM). The segment covering 512 to 522 (PAAKREHELLF) has biased composition (basic and acidic residues). Positions 526 to 536 (STPKNKEKKIK) are enriched in basic residues. Over residues 541–551 (SERDSDEEEEK) the composition is skewed to acidic residues. The span at 552-564 (SQEREETESRCDS) shows a compositional bias: basic and acidic residues. Positions 565–574 (EGEDEEDDTE) are enriched in acidic residues. Positions 579 to 631 (GTKVKVKYGRGKTQKIYEASIKSTEMDDGEILYLVHYYGWNVRYDEWVKADRI) constitute a Tudor-knot domain. Residues 640–649 (PKKKQKKKVK) are compositionally biased toward basic residues. The span at 650 to 665 (NKEDSEKDEKRDEERQ) shows a compositional bias: basic and acidic residues. Residues 676–689 (STFSPNMPYSLSKT) show a composition bias toward polar residues. A Phosphoserine modification is found at Ser-679. Low complexity predominate over residues 690-702 (SNSEGKSDSCSSD). The span at 708–753 (QLEKSSGGEDLSPDVKEELEKNENAHDDKLDEENPKIVHISKENDR) shows a compositional bias: basic and acidic residues. Ser-719 is modified (phosphoserine). Residues Lys-723 and Lys-743 each participate in a glycyl lysine isopeptide (Lys-Gly) (interchain with G-Cter in SUMO2) cross-link. At Ser-867 the chain carries Phosphoserine. Basic and acidic residues-rich tracts occupy residues 899 to 909 (KGAHVEQHFET) and 929 to 947 (TSEK…TPLK). Residues 955 to 968 (LIGPETLVCHEVDL) are retinoblastoma protein binding. The segment covering 1067–1080 (HERESREKGQKRPS) has biased composition (basic and acidic residues). Disordered stretches follow at residues 1067–1173 (HERE…RTYK) and 1216–1261 (RRRK…VECR). Ser-1113 and Ser-1149 each carry phosphoserine. Residues 1230–1252 (HAGASMSSASSDTGMSPSSSSPP) are compositionally biased toward low complexity.

In terms of assembly, identified in mSin3A corepressor complexes together with SIN3A, SIN3B, RBBP4, RBBP7, SAP30, BRMS1, HDAC1 and HDAC2. Interacts with BRMS1. Interacts with RB1. Interacts with ARID4B. Interacts with AR. As to expression, expressed in Sertoli cells of the testis.

The protein localises to the nucleus. Its function is as follows. DNA-binding protein which modulates activity of several transcription factors including RB1 (retinoblastoma-associated protein) and AR (androgen receptor). May function as part of an mSin3A repressor complex. Has no intrinsic transcriptional activity. Plays a role in the regulation of epigenetic modifications at the PWS/AS imprinting center near the SNRPN promoter, where it might function as part of a complex with RB1 and ARID4B. Involved in spermatogenesis, together with ARID4B, where it acts as a transcriptional coactivator for AR and enhances expression of genes required for sperm maturation. Regulates expression of the tight junction protein CLDN3 in the testis, which is important for integrity of the blood-testis barrier. Plays a role in myeloid homeostasis where it regulates the histone methylation state of bone marrow cells and expression of various genes involved in hematopoiesis. May function as a leukemia suppressor. This Mus musculus (Mouse) protein is AT-rich interactive domain-containing protein 4A.